A 93-amino-acid polypeptide reads, in one-letter code: Large ribosomal subunit protein bL27 (93 aa).

The propeptide occupies 1–9 (MIKINLQLF).

This sequence belongs to the bacterial ribosomal protein bL27 family. The N-terminus is cleaved by ribosomal processing cysteine protease Prp.

This is Large ribosomal subunit protein bL27 from Ruminiclostridium cellulolyticum (strain ATCC 35319 / DSM 5812 / JCM 6584 / H10) (Clostridium cellulolyticum).